A 291-amino-acid chain; its full sequence is NAD kinase (291 aa).

Asp73 serves as the catalytic Proton acceptor. Residues 73–74 (DG), 147–148 (ND), Arg175, Asp177, 188–193 (TAYALS), Ala212, and Gln246 each bind NAD(+).

This sequence belongs to the NAD kinase family. A divalent metal cation serves as cofactor.

The protein localises to the cytoplasm. The enzyme catalyses NAD(+) + ATP = ADP + NADP(+) + H(+). Functionally, involved in the regulation of the intracellular balance of NAD and NADP, and is a key enzyme in the biosynthesis of NADP. Catalyzes specifically the phosphorylation on 2'-hydroxyl of the adenosine moiety of NAD to yield NADP. The polypeptide is NAD kinase (Polaromonas naphthalenivorans (strain CJ2)).